The following is a 164-amino-acid chain: MADS-box transcription factor 51 (164 aa).

Residues 2–62 (ARRGRVQLRR…GKLYEYSSSS (61 aa)) form the MADS-box domain. Residues 133–164 (TKSKKMLAKQNGEGSRSRANSSGSRGQEEGSA) are disordered.

In terms of tissue distribution, widely expressed.

It localises to the nucleus. Its function is as follows. Probable transcription factor involved in the regulation of flowering time under short day (SD) conditions. Functions as a promoter of flowering under SD conditions, upstream of EHD1, HD3A and MADS14, but downstream of GIGANTEA (GI). May transmit a SD promotion signal from GI to EHD1. Functions independently of MADS50 to control flowering time. The sequence is that of MADS-box transcription factor 51 from Oryza sativa subsp. japonica (Rice).